A 393-amino-acid polypeptide reads, in one-letter code: Putative mitogen-activated protein kinase kinase kinase 7-like (393 aa).

A Protein kinase domain is found at 11–266 (KLSEKFLGAG…PSMKEIEKFL (256 aa)). ATP-binding positions include 17 to 25 (LGAGSGGAV) and Lys38. Catalysis depends on Asp133, which acts as the Proton acceptor. The interval 339–379 (AAADGDREVRRAEKDTERETSRAAHNGERETRRAGQDVGRE) is disordered.

It belongs to the protein kinase superfamily. STE Ser/Thr protein kinase family. MAP kinase kinase kinase subfamily. Requires Mg(2+) as cofactor.

It catalyses the reaction L-seryl-[protein] + ATP = O-phospho-L-seryl-[protein] + ADP + H(+). The enzyme catalyses L-threonyl-[protein] + ATP = O-phospho-L-threonyl-[protein] + ADP + H(+). This chain is Putative mitogen-activated protein kinase kinase kinase 7-like (Takl1), found in Drosophila melanogaster (Fruit fly).